We begin with the raw amino-acid sequence, 464 residues long: Rhodopsin (464 aa).

Topologically, residues methionine 1 to valine 33 are extracellular. Residue asparagine 8 is glycosylated (N-linked (GlcNAc...) asparagine). Residues tyrosine 34 to leucine 58 form a helical membrane-spanning segment. Topologically, residues phenylalanine 59–asparagine 70 are cytoplasmic. The helical transmembrane segment at methionine 71–phenylalanine 97 threads the bilayer. Over isoleucine 98–lysine 109 the chain is Extracellular. Cysteine 108 and cysteine 186 form a disulfide bridge. The helical transmembrane segment at valine 110–isoleucine 131 threads the bilayer. The 'Ionic lock' involved in activated form stabilization motif lies at aspartate 132–tyrosine 134. At aspartate 132–arginine 151 the chain is on the cytoplasmic side. A helical transmembrane segment spans residues alanine 152–phenylalanine 172. Residues glycine 173–serine 199 are Extracellular-facing. A helical membrane pass occupies residues asparagine 200–valine 224. Topologically, residues methionine 225 to lysine 261 are cytoplasmic. The helical transmembrane segment at isoleucine 262–leucine 283 threads the bilayer. At alanine 284–threonine 293 the chain is on the extracellular side. The chain crosses the membrane as a helical span at residues proline 294 to tyrosine 315. Lysine 305 is subject to N6-(retinylidene)lysine. Topologically, residues serine 316 to alanine 464 are cytoplasmic. 2 S-palmitoyl cysteine lipidation sites follow: cysteine 336 and cysteine 337. The interval valine 344–alanine 464 is disordered. A compositionally biased stretch (low complexity) spans alanine 367–proline 401. Composition is skewed to pro residues over residues glutamine 416–tyrosine 425 and glutamine 434–alanine 452.

It belongs to the G-protein coupled receptor 1 family. Opsin subfamily. In terms of processing, contains one covalently linked retinal chromophore. Upon light absorption, the covalently bound 11-cis-retinal is converted to all-trans-retinal. After hydrolysis of the Schiff base and release of the covalently bound all-trans-retinal, active rhodopsin is regenerated by binding of a fresh molecule of 11-cis-retinal.

It is found in the cell projection. It localises to the rhabdomere membrane. In terms of biological role, photoreceptor required for image-forming vision at low light intensity. Light-induced isomerization of 11-cis to all-trans retinal triggers a conformational change that activates signaling via G-proteins. Signaling mediates the activation of phospholipase C. Subsequent receptor phosphorylation mediates displacement of the bound G-protein alpha subunit by arrestin and terminates signaling. The polypeptide is Rhodopsin (RHO) (Sepia officinalis (Common cuttlefish)).